The primary structure comprises 270 residues: Sec-independent protein translocase protein TatC (270 aa).

A run of 6 helical transmembrane segments spans residues 25 to 45 (FIAV…LFDI), 75 to 95 (VSLL…FWMF), 111 to 131 (VVIL…FIVF), 156 to 176 (LGFA…PLVL), 195 to 211 (KYAI…ITPP), and 213 to 233 (VVTQ…SIIG). The segment at 243 to 270 (SDEEEAAENSDVQTDKSTDDTTPGEDQN) is disordered.

This sequence belongs to the TatC family. As to quaternary structure, the Tat system comprises two distinct complexes: a TatABC complex, containing multiple copies of TatA, TatB and TatC subunits, and a separate TatA complex, containing only TatA subunits. Substrates initially bind to the TatABC complex, which probably triggers association of the separate TatA complex to form the active translocon.

The protein localises to the cell inner membrane. Part of the twin-arginine translocation (Tat) system that transports large folded proteins containing a characteristic twin-arginine motif in their signal peptide across membranes. Together with TatB, TatC is part of a receptor directly interacting with Tat signal peptides. The polypeptide is Sec-independent protein translocase protein TatC (Desulforapulum autotrophicum (strain ATCC 43914 / DSM 3382 / VKM B-1955 / HRM2) (Desulfobacterium autotrophicum)).